We begin with the raw amino-acid sequence, 132 residues long: Small ribosomal subunit protein uS8c (132 aa).

The protein belongs to the universal ribosomal protein uS8 family. In terms of assembly, part of the 30S ribosomal subunit.

The protein localises to the plastid. It localises to the chloroplast. Its function is as follows. One of the primary rRNA binding proteins, it binds directly to 16S rRNA central domain where it helps coordinate assembly of the platform of the 30S subunit. The chain is Small ribosomal subunit protein uS8c (rps8) from Angiopteris evecta (Mule's foot fern).